The sequence spans 1416 residues: Uveal autoantigen with coiled-coil domains and ankyrin repeats (1416 aa).

The residue at position 1 (Met1) is an N-acetylmethionine. The disordered stretch occupies residues 1 to 24; the sequence is MKSLKSRLRRQDVPGPASSGAAAA. ANK repeat units follow at residues 38–66, 67–96, 100–129, 133–162, 166–195, and 199–228; these read LMKAAERGDVEKVTSILAKKGVNPGKLDV, EGRSVFHVVTSKGNLECLNAILIHGVDITT, AGRNALHLAAKYGHALCLQKLLQYNCPTEH, QGRTALHDAAMADCPSSIQLLCDHGASVNA, DGRTPLVLATQMSRPTICQLLIDRGADVNS, and QNRTALMLGCEYGCRDAVEVLIKNGADISL. Coiled-coil stretches lie at residues 286 to 374 and 438 to 1386; these read VKSH…NRFK and ENEI…IYRT. Lys1035 is covalently cross-linked (Glycyl lysine isopeptide (Lys-Gly) (interchain with G-Cter in SUMO2)).

In terms of assembly, component of the apoptosome complex, composed of APAF1, pro-caspase-9 and UACA. In the complex, it probably interacts directly with APAF1. Interacts with LGALS3, ARF6 and ACTB. Interacts with RAB39A. Highly expressed in skeletal muscle, heart, kidney and pancreas. Expressed in choroid, retina and epidermal melanocytes. Expressed in eye muscles and thyroid follicular cells.

The protein localises to the nucleus. The protein resides in the cytoplasm. It localises to the cytoskeleton. Functionally, regulates APAF1 expression and plays an important role in the regulation of stress-induced apoptosis. Promotes apoptosis by regulating three pathways, apoptosome up-regulation, LGALS3/galectin-3 down-regulation and NF-kappa-B inactivation. Regulates the redistribution of APAF1 into the nucleus after proapoptotic stress. Down-regulates the expression of LGALS3 by inhibiting NFKB1. Modulates isoactin dynamics to regulate the morphological alterations required for cell growth and motility. Interaction with ARF6 may modulate cell shape and motility after injury. May be involved in multiple neurite formation. The sequence is that of Uveal autoantigen with coiled-coil domains and ankyrin repeats (UACA) from Homo sapiens (Human).